Here is a 380-residue protein sequence, read N- to C-terminus: Pregnancy-associated glycoprotein 4 (380 aa).

Residues 1–15 (MKWLVLLGLVAFSEC) form the signal peptide. The propeptide at 16–53 (IFKIPLRRVKTMRKTLSGKNMLNDVLKEHPYRLPQISF) is activation peptide. One can recognise a Peptidase A1 domain in the interval 71–377 (YVGNITIGTP…DRGNDRIGLA (307 aa)). Residue Asn74 is glycosylated (N-linked (GlcNAc...) asparagine). The active site involves Asp89. Cys102 and Cys107 are disulfide-bonded. Asn125 carries an N-linked (GlcNAc...) asparagine glycan. Cys261 and Cys265 are disulfide-bonded. Asp270 is a catalytic residue. The cysteines at positions 303 and 337 are disulfide-linked.

The protein belongs to the peptidase A1 family. In terms of tissue distribution, trophoblast and placental tissue. Produced specifically in the invasive binucleate cells of the placenta.

It localises to the secreted. The protein resides in the extracellular space. This Ovis aries (Sheep) protein is Pregnancy-associated glycoprotein 4.